Here is an 898-residue protein sequence, read N- to C-terminus: MGISFSIPFDPCVNKVSQWLDMKVSYTHNLEKNLVALETTMEELKAKRDDLLRKLKREEDRGLQTLGEIKVWLNRVETIESRVNDLLNARNAELQRLCLCGFCSKSLTTSYRYGKSVFLKLREVEKLERRVFEVISDQASTSEVEEQQLQPTIVGQETMLDNAWNHLMEDGVGIMGLYGMGGVGKTTLLTQINNKFSKYMCGFDSVIWVVVSKEVNVENILDEIAQKVHISGEKWDTKYKYQKGVYLYNFLRKMRFVLFLDDIWEKVNLVEIGVPFPTIKNKCKVVFTTRSLDVCTSMGVEKPMEVQCLADNDAYDLFQKKVGQITLGSDPEIRELSRVVAKKCCGLPLALNVVSETMSCKRTVQEWRHAIYVLNSYAAKFSGMDDKILPLLKYSYDSLKGEDVKMCLLYCALFPEDAKIRKENLIEYWICEEIIDGSEGIDKAENQGYEIIGSLVRASLLMEEVELDGANIVCLHDVVREMALWIASDLGKQNEAFIVRASVGLREILKVENWNVVRRMSLMKNNIAHLDGRLDCMELTTLLLQSTHLEKISSEFFNSMPKLAVLDLSGNYYLSELPNGISELVSLQYLNLSSTGIRHLPKGLQELKKLIHLYLERTSQLGSMVGISCLHNLKVLKLSGSSYAWDLDTVKELEALEHLEVLTTTIDDCTLGTDQFLSSHRLMSCIRFLKISNNSNRNRNSSRISLPVTMDRLQEFTIEHCHTSEIKMGRICSFSSLIEVNLSNCRRLRELTFLMFAPNLKRLHVVSSNQLEDIINKEKAHDGEKSGIVPFPKLNELHLYNLRELKNIYWSPLPFPCLEKINVMGCPNLKKLPLDSKSGKHGGNGLIITHREMEWITRVEWEDEATKTRFLANRSSFSSSLICFSNDLVSRDMNCFHL.

The stretch at 24–88 (VSYTHNLEKN…IESRVNDLLN (65 aa)) forms a coiled coil. Residues 137–440 (DQASTSEVEE…CEEIIDGSEG (304 aa)) enclose the NB-ARC domain. 179 to 186 (GMGGVGKT) is an ATP binding site. LRR repeat units follow at residues 516–537 (VVRRMSLMKNNIAHLDGRLDCM), 538–559 (ELTTLLLQSTHLEKISSEFFNS), 562–584 (KLAVLDLSGNYYLSELPNGISEL), 586–608 (SLQYLNLSSTGIRHLPKGLQELK), 609–631 (KLIHLYLERTSQLGSMVGISCLH), and 632–654 (NLKVLKLSGSSYAWDLDTVKELE).

Belongs to the disease resistance NB-LRR family.

Potential disease resistance protein. The sequence is that of Putative disease resistance protein At1g63350 from Arabidopsis thaliana (Mouse-ear cress).